The chain runs to 379 residues: UDP-4-amino-4-deoxy-L-arabinose--oxoglutarate aminotransferase (379 aa).

Residue Lys-182 is modified to N6-(pyridoxal phosphate)lysine.

This sequence belongs to the DegT/DnrJ/EryC1 family. ArnB subfamily. In terms of assembly, homodimer. Pyridoxal 5'-phosphate is required as a cofactor.

It carries out the reaction UDP-4-amino-4-deoxy-beta-L-arabinose + 2-oxoglutarate = UDP-beta-L-threo-pentopyranos-4-ulose + L-glutamate. It participates in nucleotide-sugar biosynthesis; UDP-4-deoxy-4-formamido-beta-L-arabinose biosynthesis; UDP-4-deoxy-4-formamido-beta-L-arabinose from UDP-alpha-D-glucuronate: step 2/3. The protein operates within bacterial outer membrane biogenesis; lipopolysaccharide biosynthesis. Catalyzes the conversion of UDP-4-keto-arabinose (UDP-Ara4O) to UDP-4-amino-4-deoxy-L-arabinose (UDP-L-Ara4N). The modified arabinose is attached to lipid A and is required for resistance to polymyxin and cationic antimicrobial peptides. The polypeptide is UDP-4-amino-4-deoxy-L-arabinose--oxoglutarate aminotransferase (Escherichia coli (strain ATCC 8739 / DSM 1576 / NBRC 3972 / NCIMB 8545 / WDCM 00012 / Crooks)).